Here is a 155-residue protein sequence, read N- to C-terminus: 6,7-dimethyl-8-ribityllumazine synthase (155 aa).

5-amino-6-(D-ribitylamino)uracil is bound by residues Phe23, 57–59 (AFE), and 81–83 (AVI). (2S)-2-hydroxy-3-oxobutyl phosphate is bound at residue 86–87 (ST). Residue His89 is the Proton donor of the active site. Residue Phe114 coordinates 5-amino-6-(D-ribitylamino)uracil. Arg128 is a (2S)-2-hydroxy-3-oxobutyl phosphate binding site.

It belongs to the DMRL synthase family.

The enzyme catalyses (2S)-2-hydroxy-3-oxobutyl phosphate + 5-amino-6-(D-ribitylamino)uracil = 6,7-dimethyl-8-(1-D-ribityl)lumazine + phosphate + 2 H2O + H(+). It functions in the pathway cofactor biosynthesis; riboflavin biosynthesis; riboflavin from 2-hydroxy-3-oxobutyl phosphate and 5-amino-6-(D-ribitylamino)uracil: step 1/2. In terms of biological role, catalyzes the formation of 6,7-dimethyl-8-ribityllumazine by condensation of 5-amino-6-(D-ribitylamino)uracil with 3,4-dihydroxy-2-butanone 4-phosphate. This is the penultimate step in the biosynthesis of riboflavin. The protein is 6,7-dimethyl-8-ribityllumazine synthase of Citrifermentans bemidjiense (strain ATCC BAA-1014 / DSM 16622 / JCM 12645 / Bem) (Geobacter bemidjiensis).